The primary structure comprises 249 residues: Proteasome subunit alpha 2 (249 aa).

Methionine 1 carries the post-translational modification N-acetylmethionine.

The protein belongs to the peptidase T1A family. The 20S proteasome core is composed of 14 alpha and 14 beta subunits that assemble into four stacked heptameric rings, resulting in a barrel-shaped structure. The two inner rings, each composed of seven catalytic beta subunits, are sandwiched by two outer rings, each composed of seven alpha subunits. H.volcanii produces at least 2 types of 20S proteasomes: an alpha1-beta proteasome and a proteasome containing all three subunits (alpha1, alpha2, and beta) that appears to be asymmetrical with homo-oligomeric alpha1 and alpha2 rings positioned on separate ends. The catalytic chamber with the active sites is on the inside of the barrel. Has probably a gated structure, the ends of the cylinder being occluded by the N-termini of the alpha-subunits. Is likely capped at one or both ends by the proteasome regulatory ATPase, PAN.

Its subcellular location is the cytoplasm. Its activity is regulated as follows. The formation of the proteasomal ATPase PAN-20S proteasome complex, via the docking of the C-termini of PAN into the intersubunit pockets in the alpha-rings, triggers opening of the gate for substrate entry. Interconversion between the open-gate and close-gate conformations leads to a dynamic regulation of the 20S proteasome proteolysis activity. Its function is as follows. Component of the proteasome core, a large protease complex with broad specificity involved in protein degradation. The H.volcanii alpha1-beta-alpha2 proteasome is able to cleave oligopeptides after Tyr and thus displays chymotrypsin-like activity. The chain is Proteasome subunit alpha 2 from Haloferax volcanii (strain ATCC 29605 / DSM 3757 / JCM 8879 / NBRC 14742 / NCIMB 2012 / VKM B-1768 / DS2) (Halobacterium volcanii).